The primary structure comprises 2210 residues: Genome polyprotein (2210 aa).

Residues Met1 to Pro22 are disordered. The region spanning Ser426 to Val585 is the SF3 helicase domain. Position 456–463 (Gly456–Ser463) interacts with ATP. Residue Tyr940 is modified to O-(5'-phospho-RNA)-tyrosine. A Peptidase C24 domain is found at Gly991–Pro1136. Residues His1025, Asp1039, and Cys1103 each act as for 3CLpro activity in the active site. One can recognise a RdRp catalytic domain in the interval Asp1379–Ile1501. The segment at Ser1654–Ala1686 is disordered.

Post-translationally, specific enzymatic cleavages by its own cysteine protease yield mature proteins. The protease cleaves itself from the nascent polyprotein autocatalytically. Precursor p41 can be cleaved by viral 3CLpro into protein p19 and VPg, or cleaved by host protease into protein p23/2 and protein p18. In terms of processing, VPg is uridylylated by the polymerase and is covalently attached to the 5'-end of the polyadenylated genomic and subgenomic RNAs. This uridylylated form acts as a nucleotide-peptide primer for the polymerase.

The protein localises to the virion. The protein resides in the host cytoplasm. The catalysed reaction is a ribonucleoside 5'-triphosphate + H2O = a ribonucleoside 5'-diphosphate + phosphate + H(+). The enzyme catalyses Endopeptidase with a preference for cleavage when the P1 position is occupied by Glu-|-Xaa and the P1' position is occupied by Gly-|-Yaa.. It carries out the reaction RNA(n) + a ribonucleoside 5'-triphosphate = RNA(n+1) + diphosphate. In terms of biological role, displays NTPase activity, but no helicase activity. Induces the formation of convoluted membranes derived from the host ER. These remodeled membranes probably form the viral factories that contain the replication complex. Together with NS2 and NS4, initiates the formation of the replication complex. Its function is as follows. Viral genome-linked protein is covalently linked to the 5'-end of the positive-strand, negative-strand genomic RNAs and subgenomic RNA. Acts as a genome-linked replication primer. May recruit ribosome to viral RNA thereby promoting viral proteins translation. Interacts with host translation initiation complex to allow the translation of viral proteins. Processes the polyprotein. 3CLpro-RdRp is first released by autocleavage, then all other proteins are cleaved. May cleave polyadenylate-binding protein thereby inhibiting cellular translation. Functionally, replicates genomic and antigenomic RNA by recognizing replications specific signals. Also transcribes a subgenomic mRNA by initiating RNA synthesis internally on antigenomic RNA. This sgRNA codes for structural proteins. Catalyzes the covalent attachment VPg with viral RNAs. In terms of biological role, capsid protein self assembles to form an icosahedral capsid with a T=3 symmetry, about 35 nm in diameter, and consisting of 180 capsid proteins. A smaller form of capsid with a diameter of 23 nm might be capsid proteins assembled as icosahedron with T=1 symmetry. The capsid encapsulate VP2 proteins and genomic or subgenomic RNA. Attaches virion to target cells by binding histo-blood group antigens, inducing endocytosis of the viral particle. Acidification of the endosome induces conformational change of capsid protein thereby injecting virus genomic RNA into host cytoplasm. This Bos taurus (Bovine) protein is Genome polyprotein.